We begin with the raw amino-acid sequence, 198 residues long: Thymidine kinase (198 aa).

Residues 9–16 and 87–90 contribute to the ATP site; these read STMNAGKS and DEAQ. The Proton acceptor role is filled by glutamate 88. Residues cysteine 145, cysteine 147, cysteine 182, and histidine 185 each coordinate Zn(2+).

It belongs to the thymidine kinase family. In terms of assembly, homotetramer.

It localises to the cytoplasm. It catalyses the reaction thymidine + ATP = dTMP + ADP + H(+). This is Thymidine kinase from Ruegeria pomeroyi (strain ATCC 700808 / DSM 15171 / DSS-3) (Silicibacter pomeroyi).